Reading from the N-terminus, the 186-residue chain is MKLTRIQKEKWIPLFAAGLVVVLDQCAKLLVGAYVPTNTSGVRVLGDFVRIVHVYNVGAAFSIGHQLNQVLRTLVLGIVPLIIMFLIVFSYFRTDAFCPVQRWAVSGIIGGGIGNLIDRFLRPNGVLDFIDVKFFGIFGFERWPAFNIADAVIMTCGLLLIISFIKQEKEISSQPSCNETGGVFRT.

Transmembrane regions (helical) follow at residues 11–31 (WIPL…KLLV), 44–64 (VLGD…FSIG), and 70–90 (VLRT…IVFS). Residues aspartate 128 and aspartate 150 contribute to the active site. Residues 145–165 (AFNIADAVIMTCGLLLIISFI) traverse the membrane as a helical segment.

It belongs to the peptidase A8 family.

The protein resides in the cell inner membrane. The enzyme catalyses Release of signal peptides from bacterial membrane prolipoproteins. Hydrolyzes -Xaa-Yaa-Zaa-|-(S,diacylglyceryl)Cys-, in which Xaa is hydrophobic (preferably Leu), and Yaa (Ala or Ser) and Zaa (Gly or Ala) have small, neutral side chains.. Its pathway is protein modification; lipoprotein biosynthesis (signal peptide cleavage). Its function is as follows. This protein specifically catalyzes the removal of signal peptides from prolipoproteins. This chain is Lipoprotein signal peptidase, found in Treponema pallidum (strain Nichols).